We begin with the raw amino-acid sequence, 239 residues long: Peptidase E (239 aa).

Catalysis depends on charge relay system residues Ser122, Asp137, and His159.

The protein belongs to the peptidase S51 family.

The protein resides in the cytoplasm. It catalyses the reaction Dipeptidase E catalyzes the hydrolysis of dipeptides Asp-|-Xaa. It does not act on peptides with N-terminal Glu, Asn or Gln, nor does it cleave isoaspartyl peptides.. Its function is as follows. Hydrolyzes dipeptides containing N-terminal aspartate residues. May play a role in allowing the cell to use peptide aspartate to spare carbon otherwise required for the synthesis of the aspartate family of amino acids. The polypeptide is Peptidase E (Shewanella baltica (strain OS195)).